A 468-amino-acid polypeptide reads, in one-letter code: Sorting and assembly machinery component 50 homolog A (468 aa).

A disordered region spans residues 1–24 (MGTVHARSLDPLPMNGPDFGSPDD). Positions 44 to 124 (VVVQRVHFEG…LDVTFEVTEL (81 aa)) constitute a POTRA domain.

This sequence belongs to the SAM50/omp85 family. Associates with the mitochondrial contact site and cristae organizing system (MICOS) complex (also known as MINOS or MitOS complex).

The protein localises to the mitochondrion outer membrane. Its function is as follows. May play a role in the maintenance of the structure of mitochondrial cristae. The sequence is that of Sorting and assembly machinery component 50 homolog A (samm50-a) from Xenopus laevis (African clawed frog).